We begin with the raw amino-acid sequence, 180 residues long: Nucleoside triphosphate/diphosphate phosphatase (180 aa).

R26 serves as the catalytic Proton donor. N90, D106, D108, D110, D123, and E126 together coordinate Mg(2+).

It belongs to the Ntdp family. Mg(2+) is required as a cofactor.

The catalysed reaction is a ribonucleoside 5'-triphosphate + H2O = a ribonucleoside 5'-diphosphate + phosphate + H(+). It catalyses the reaction a ribonucleoside 5'-diphosphate + H2O = a ribonucleoside 5'-phosphate + phosphate + H(+). Has nucleoside phosphatase activity towards nucleoside triphosphates and nucleoside diphosphates. The chain is Nucleoside triphosphate/diphosphate phosphatase from Staphylococcus epidermidis (strain ATCC 35984 / DSM 28319 / BCRC 17069 / CCUG 31568 / BM 3577 / RP62A).